The primary structure comprises 154 residues: Myoglobin (154 aa).

Residues 2–148 form the Globin domain; the sequence is GLSDGEWQLV…FRNDIAAKYK (147 aa). A Phosphoserine modification is found at Ser4. Residue His65 coordinates nitrite. His65 is a binding site for O2. Phosphothreonine is present on residues Thr68 and Thr75. His94 provides a ligand contact to heme b. Ser121 is subject to Phosphoserine.

Belongs to the globin family. As to quaternary structure, monomeric.

Its subcellular location is the cytoplasm. The protein resides in the sarcoplasm. The catalysed reaction is Fe(III)-heme b-[protein] + nitric oxide + H2O = Fe(II)-heme b-[protein] + nitrite + 2 H(+). It carries out the reaction H2O2 + AH2 = A + 2 H2O. Its function is as follows. Monomeric heme protein which primary function is to store oxygen and facilitate its diffusion within muscle tissues. Reversibly binds oxygen through a pentacoordinated heme iron and enables its timely and efficient release as needed during periods of heightened demand. Depending on the oxidative conditions of tissues and cells, and in addition to its ability to bind oxygen, it also has a nitrite reductase activity whereby it regulates the production of bioactive nitric oxide. Under stress conditions, like hypoxia and anoxia, it also protects cells against reactive oxygen species thanks to its pseudoperoxidase activity. In Mus musculus (Mouse), this protein is Myoglobin.